The following is a 101-amino-acid chain: Non-histone chromosomal protein HMG-14 (101 aa).

Positions Met1–Asp101 are disordered. The residue at position 7 (Ser7) is an ADP-ribosylserine. Phosphoserine is present on Ser8. An N6-acetyllysine modification is found at Lys14. Ser21 is subject to Phosphoserine. Residue Ser25 is modified to ADP-ribosylserine; alternate. A Phosphoserine; alternate modification is found at Ser25. The residue at position 27 (Lys27) is an N6-acetyllysine. 2 stretches are compositionally biased toward basic and acidic residues: residues Val33–Val51 and Glu70–Glu86. Position 82 is a phosphothreonine (Thr82). The residue at position 83 (Lys83) is an N6-acetyllysine. A phosphoserine mark is found at Ser87, Ser90, and Ser100.

The protein belongs to the HMGN family. In terms of assembly, interacts with transcriptional regulator SEHBP. Phosphorylation on Ser-21 and Ser-25 weakens binding to nucleosomes and increases the rate of H3 phosphorylation.

It localises to the nucleus. Its function is as follows. Binds to the inner side of the nucleosomal DNA thus altering the interaction between the DNA and the histone octamer. May be involved in the process which maintains transcribable genes in a unique chromatin conformation. Inhibits the phosphorylation of nucleosomal histones H3 and H2A by RPS6KA5/MSK1 and RPS6KA3/RSK2. The protein is Non-histone chromosomal protein HMG-14 (HMGN1) of Bos taurus (Bovine).